A 299-amino-acid polypeptide reads, in one-letter code: Acetylglutamate kinase (299 aa).

Residues 72-73 (GG), R94, and N196 each bind substrate.

This sequence belongs to the acetylglutamate kinase family. ArgB subfamily.

The protein resides in the cytoplasm. It catalyses the reaction N-acetyl-L-glutamate + ATP = N-acetyl-L-glutamyl 5-phosphate + ADP. The protein operates within amino-acid biosynthesis; L-arginine biosynthesis; N(2)-acetyl-L-ornithine from L-glutamate: step 2/4. Catalyzes the ATP-dependent phosphorylation of N-acetyl-L-glutamate. This is Acetylglutamate kinase from Burkholderia cenocepacia (strain ATCC BAA-245 / DSM 16553 / LMG 16656 / NCTC 13227 / J2315 / CF5610) (Burkholderia cepacia (strain J2315)).